A 662-amino-acid polypeptide reads, in one-letter code: Phosphomethylpyrimidine synthase (662 aa).

Substrate contacts are provided by residues N235, M264, Y293, H329, 349–351, 390–393, and E429; these read SRG and DGMR. Residue H433 participates in Zn(2+) binding. Y456 contacts substrate. Residue H497 participates in Zn(2+) binding. [4Fe-4S] cluster is bound by residues C577, C580, and C585.

This sequence belongs to the ThiC family. Homodimer. The cofactor is [4Fe-4S] cluster.

It catalyses the reaction 5-amino-1-(5-phospho-beta-D-ribosyl)imidazole + S-adenosyl-L-methionine = 4-amino-2-methyl-5-(phosphooxymethyl)pyrimidine + CO + 5'-deoxyadenosine + formate + L-methionine + 3 H(+). It participates in cofactor biosynthesis; thiamine diphosphate biosynthesis. In terms of biological role, catalyzes the synthesis of the hydroxymethylpyrimidine phosphate (HMP-P) moiety of thiamine from aminoimidazole ribotide (AIR) in a radical S-adenosyl-L-methionine (SAM)-dependent reaction. The polypeptide is Phosphomethylpyrimidine synthase (Shewanella halifaxensis (strain HAW-EB4)).